The primary structure comprises 113 residues: Na(+)/H(+) antiporter subunit C1 (113 aa).

3 helical membrane passes run 1-21 (MEII…YLVL), 28-48 (IVMG…TMGG), and 72-92 (LILT…VLAF).

Belongs to the CPA3 antiporters (TC 2.A.63) subunit C family. In terms of assembly, may form a heterooligomeric complex that consists of seven subunits: mnhA1, mnhB1, mnhC1, mnhD1, mnhE1, mnhF1 and mnhG1.

The protein localises to the cell membrane. In terms of biological role, mnh complex is a Na(+)/H(+) antiporter involved in Na(+) excretion. The polypeptide is Na(+)/H(+) antiporter subunit C1 (mnhC1) (Staphylococcus aureus (strain JH1)).